The primary structure comprises 391 residues: Formate-dependent phosphoribosylglycinamide formyltransferase (391 aa).

N(1)-(5-phospho-beta-D-ribosyl)glycinamide contacts are provided by residues 20–21 and glutamate 80; that span reads EL. ATP contacts are provided by residues arginine 112, lysine 153, 158–163, 193–196, and glutamate 201; these read SSGKGQ and EGFI. The region spanning 117 to 306 is the ATP-grasp domain; it reads RLAAEELDLS…EFALHVRAFT (190 aa). Positions 265 and 277 each coordinate Mg(2+). Residues aspartate 284, lysine 354, and 361 to 362 contribute to the N(1)-(5-phospho-beta-D-ribosyl)glycinamide site; that span reads RR.

Belongs to the PurK/PurT family. As to quaternary structure, homodimer.

The enzyme catalyses N(1)-(5-phospho-beta-D-ribosyl)glycinamide + formate + ATP = N(2)-formyl-N(1)-(5-phospho-beta-D-ribosyl)glycinamide + ADP + phosphate + H(+). It participates in purine metabolism; IMP biosynthesis via de novo pathway; N(2)-formyl-N(1)-(5-phospho-D-ribosyl)glycinamide from N(1)-(5-phospho-D-ribosyl)glycinamide (formate route): step 1/1. Functionally, involved in the de novo purine biosynthesis. Catalyzes the transfer of formate to 5-phospho-ribosyl-glycinamide (GAR), producing 5-phospho-ribosyl-N-formylglycinamide (FGAR). Formate is provided by PurU via hydrolysis of 10-formyl-tetrahydrofolate. The polypeptide is Formate-dependent phosphoribosylglycinamide formyltransferase (Vibrio parahaemolyticus serotype O3:K6 (strain RIMD 2210633)).